The chain runs to 447 residues: tRNA-2-methylthio-N(6)-dimethylallyladenosine synthase (447 aa).

The region spanning 3-120 (KKLYIETHGC…LPEMIDAART (118 aa)) is the MTTase N-terminal domain. Cys-12, Cys-49, Cys-83, Cys-157, Cys-161, and Cys-164 together coordinate [4Fe-4S] cluster. Positions 143-375 (RVDGPSAFVS…QHRINQYGFE (233 aa)) constitute a Radical SAM core domain. In terms of domain architecture, TRAM spans 378–442 (RRMVGTVQRI…PHSLRGTLLD (65 aa)).

The protein belongs to the methylthiotransferase family. MiaB subfamily. In terms of assembly, monomer. Requires [4Fe-4S] cluster as cofactor.

Its subcellular location is the cytoplasm. It catalyses the reaction N(6)-dimethylallyladenosine(37) in tRNA + (sulfur carrier)-SH + AH2 + 2 S-adenosyl-L-methionine = 2-methylsulfanyl-N(6)-dimethylallyladenosine(37) in tRNA + (sulfur carrier)-H + 5'-deoxyadenosine + L-methionine + A + S-adenosyl-L-homocysteine + 2 H(+). In terms of biological role, catalyzes the methylthiolation of N6-(dimethylallyl)adenosine (i(6)A), leading to the formation of 2-methylthio-N6-(dimethylallyl)adenosine (ms(2)i(6)A) at position 37 in tRNAs that read codons beginning with uridine. The protein is tRNA-2-methylthio-N(6)-dimethylallyladenosine synthase of Ectopseudomonas mendocina (strain ymp) (Pseudomonas mendocina).